Reading from the N-terminus, the 60-residue chain is Large ribosomal subunit protein uL30 (60 aa).

This sequence belongs to the universal ribosomal protein uL30 family. Part of the 50S ribosomal subunit.

In Bacillus cereus (strain G9842), this protein is Large ribosomal subunit protein uL30.